The sequence spans 270 residues: Expansin-B10 (270 aa).

The signal sequence occupies residues 1-31 (MAVNVRTMWSSMRAQVAMVVALVFLVRGAWC). The N-linked (GlcNAc...) asparagine glycan is linked to Asn41. Residues 70-176 (GGGCGYKDVN…RRVKCKYDSK (107 aa)) form the Expansin-like EG45 domain. Disulfide bonds link Cys73–Cys101, Cys104–Cys171, and Cys109–Cys115. The Expansin-like CBD domain maps to 188 to 269 (NYLALLVKYV…NWKANTAYTA (82 aa)).

Belongs to the expansin family. Expansin B subfamily. In terms of tissue distribution, expressed in pollen.

The protein localises to the secreted. Its subcellular location is the cell wall. It localises to the membrane. May aid fertilization by loosening the cell wall of the stigma and style, thereby facilitating penetration of the pollen tube. Acts selectively on grass cell walls, which are relatively poor in pectins and xyloglucans and rich in glucuronoarabinoxylans and (1-3),(1-4)-beta-D-glucans, when compared with cell walls of other angiosperms, including other monocots. In Zea mays (Maize), this protein is Expansin-B10 (EXPB10).